A 311-amino-acid chain; its full sequence is Oxygen-dependent coproporphyrinogen-III oxidase (311 aa).

Ser-93 provides a ligand contact to substrate. Positions 97 and 107 each coordinate a divalent metal cation. Residue His-107 is the Proton donor of the active site. 109-111 contacts substrate; sequence NVR. The a divalent metal cation site is built by His-153 and His-184. The important for dimerization stretch occupies residues 252 to 287; it reads YVEFNLVFDRGTLFGLQSGGRTESILMSLPPVVKWR. 270–272 provides a ligand contact to substrate; it reads GGR.

Belongs to the aerobic coproporphyrinogen-III oxidase family. In terms of assembly, homodimer. Requires a divalent metal cation as cofactor.

The protein resides in the cytoplasm. It carries out the reaction coproporphyrinogen III + O2 + 2 H(+) = protoporphyrinogen IX + 2 CO2 + 2 H2O. It participates in porphyrin-containing compound metabolism; protoporphyrin-IX biosynthesis; protoporphyrinogen-IX from coproporphyrinogen-III (O2 route): step 1/1. In terms of biological role, involved in the heme biosynthesis. Catalyzes the aerobic oxidative decarboxylation of propionate groups of rings A and B of coproporphyrinogen-III to yield the vinyl groups in protoporphyrinogen-IX. The protein is Oxygen-dependent coproporphyrinogen-III oxidase of Aromatoleum aromaticum (strain DSM 19018 / LMG 30748 / EbN1) (Azoarcus sp. (strain EbN1)).